Here is a 269-residue protein sequence, read N- to C-terminus: Uncharacterised methyltransferase MT1546 (269 aa).

This sequence belongs to the methyltransferase superfamily.

The polypeptide is Uncharacterised methyltransferase MT1546 (Mycobacterium tuberculosis (strain CDC 1551 / Oshkosh)).